Consider the following 1136-residue polypeptide: MPTAAAAATASLRVSNIPPSAVAAELLAFFDSAVAVAGGAFACEIAAAHRGWLSRGHGTVQFGSAAAAAAAAGLASSGRLPRFLGALLSVSPSPVDLLPRASDLSLRAAGAGLVVGDRVAERVFEAADAWDGVRAEVIPGKRRVDLYLEHDSQRYKLEVLFEDMKDCLGCTLDGMGAILLQLNYAPRIHTAISGPAVNSRFMDDRFHACKEDAKFSWVRALDFTPNYSFGRCSTLVLKLGKSALVSDILKSLPFSGNLGELTMNSMDGVGASSNVVPLVHCPRDYSVPYEVLFRLNSLMHMGKIVAKHVNADLFKALQELPVDVSRRIFEKMHKLESTCYGPLQFIQQEAYSMKRSHNVLLSNEGEGEGERKLMKCYRVNITPSKIFCFGPEEEVTNYVVKHHSAYASDFVRVTFVDEDWSKLSSNAISARIEQGFFSKPFKTGLYYRILSILKKGFSIGPKNFEFLAFSASQLRGNSVWMFASNASLNAGGIRRWMGHFENIRSVSKCAARMGQLFSSSRQTFEVLRWDVEVIPDIEITTDGSKYIFSDGIGKISLRFAKRVAHHVGLDPTNLPSAFQIRYGGYKGVIAIDPMSSIDLSLRPSMKKFESESRMLNITSWSKSQPCYVNREIISLLSTLGIRDEIFVAMQQDEMRETEEMLTNKEVALSVLGKLGGSETKTAVKMLLQGYEPSSEPYLSMILKAHQENRLTDIRTRCKIHVPKGRVLIGCLDETGVLEYGQVYIRITKNSKEQKDSNQSYFYNDDGKTATVVGKVAITKNPCLHPGDIRVLEAIYDPDLVGMVDCLVFPQRGERPHPNECSGGDLDGDLYFITWDDKLIPEKVDTPMDYTATRPRIMDHVVTLEEIQKHFVDYMINDSLGAISTAHLIHADRSPLKARSPECLQLATLHSMAVDFAKTGAPAEMPRTLRPREYPDFMERWEKPMYISNGVLGKLYRSAMGHMEKSGDSGALSSSSAQPSPTYDPDLEVPGSDEFLQAAEEYYELYEEKLTTLMNYYRAELEDEILTGNIRNKMLYLKRDNKRYFEMKDRIVAAVDALHREARGWLLSSRKEEDASRMASAWYRVTYHPDRRRGKRFWSFPWIACDNLLAIKASSQLRRRRQKDDDSTAVVQMDCSA.

Positions 965–989 (SGDSGALSSSSAQPSPTYDPDLEVP) are disordered. Residues 967-980 (DSGALSSSSAQPSP) are compositionally biased toward low complexity.

Belongs to the RdRP family.

It catalyses the reaction RNA(n) + a ribonucleoside 5'-triphosphate = RNA(n+1) + diphosphate. Its function is as follows. Probably involved in the RNA silencing pathway and required for the generation of small interfering RNAs (siRNAs). The protein is Probable RNA-dependent RNA polymerase 2 (RDR2) of Oryza sativa subsp. japonica (Rice).